Reading from the N-terminus, the 131-residue chain is Small ribosomal subunit protein uS11 (131 aa).

Belongs to the universal ribosomal protein uS11 family. In terms of assembly, part of the 30S ribosomal subunit. Interacts with proteins S7 and S18. Binds to IF-3.

Its function is as follows. Located on the platform of the 30S subunit, it bridges several disparate RNA helices of the 16S rRNA. Forms part of the Shine-Dalgarno cleft in the 70S ribosome. This Trichodesmium erythraeum (strain IMS101) protein is Small ribosomal subunit protein uS11.